Consider the following 101-residue polypeptide: MSRKSVVQRNLKRVAISAALSEKRKALVAIIKDESLSMSERFAAQLKLSKMPRDSSYIRIRNRCLITGRPRGYYRKFKMSRIVLRQLGSIGQIPGLTKSSW.

Belongs to the universal ribosomal protein uS14 family. In terms of assembly, part of the 30S ribosomal subunit. Contacts proteins S3 and S10.

In terms of biological role, binds 16S rRNA, required for the assembly of 30S particles and may also be responsible for determining the conformation of the 16S rRNA at the A site. In Anaplasma phagocytophilum (strain HZ), this protein is Small ribosomal subunit protein uS14.